The following is an 805-amino-acid chain: Mediator of RNA polymerase II transcription subunit 25 (805 aa).

2 disordered regions span residues 308-332 (NQMP…PQNT) and 647-691 (QQPQ…NPQL). Low complexity predominate over residues 647–678 (QQPQQAASQAPPQATQTTVQAPGQPQNPQPGA). Positions 691-695 (LRNLL) match the LXXLL motif motif.

It belongs to the Mediator complex subunit 25 family. As to quaternary structure, component of the Mediator complex.

The protein resides in the nucleus. Functionally, component of the Mediator complex, a coactivator involved in the regulated transcription of nearly all RNA polymerase II-dependent genes. Mediator functions as a bridge to convey information from gene-specific regulatory proteins to the basal RNA polymerase II transcription machinery. Mediator is recruited to promoters by direct interactions with regulatory proteins and serves as a scaffold for the assembly of a functional preinitiation complex with RNA polymerase II and the general transcription factors. The sequence is that of Mediator of RNA polymerase II transcription subunit 25 (med25) from Xenopus tropicalis (Western clawed frog).